A 105-amino-acid chain; its full sequence is UPF0251 protein AF_0666 (105 aa).

It belongs to the UPF0251 family.

This chain is UPF0251 protein AF_0666, found in Archaeoglobus fulgidus (strain ATCC 49558 / DSM 4304 / JCM 9628 / NBRC 100126 / VC-16).